A 257-amino-acid chain; its full sequence is MSMVDTAPGKIQVRDLNFYYGKFHALKNINLDIAKNQVTAFIGPSGCGKSTLLRTFNKMYSLYPEQRAEGEIILDGENILTQAQDIALLRAKVGMVFQKPTPFPMSIYDNIAFGVRLFEKLSRADMDERVQWALTKAALWNETKDKLHQSGYSLSGGQQQRLCIARGIAIRPEVLLLDEPCSALDPISTGRIEELITELKQDYTVVIVTHNMQQAARCSDHTAFMYLGELIEFSDTDALFTRPAKKQTEDYITGRYG.

The ABC transporter domain maps to Ile11–Ile252. Residue Gly43–Ser50 coordinates ATP.

This sequence belongs to the ABC transporter superfamily. Phosphate importer (TC 3.A.1.7) family. The complex is composed of two ATP-binding proteins (PstB), two transmembrane proteins (PstC and PstA) and a solute-binding protein (PstS).

Its subcellular location is the cell inner membrane. The catalysed reaction is phosphate(out) + ATP + H2O = ADP + 2 phosphate(in) + H(+). Part of the ABC transporter complex PstSACB involved in phosphate import. Responsible for energy coupling to the transport system. This Enterobacter cloacae protein is Phosphate import ATP-binding protein PstB.